Consider the following 295-residue polypeptide: Sulfotransferase 1E1 (295 aa).

Residue 48–53 coordinates 3'-phosphoadenylyl sulfate; that stretch reads KSGSTW. 106 to 108 is a substrate binding site; it reads KTH. Residue H108 is the Proton acceptor of the active site. 3'-phosphoadenylyl sulfate-binding residues include R130 and S138. Position 156 is a phosphoserine (S156). 3'-phosphoadenylyl sulfate is bound by residues Y193, 227-232, and 257-259; these read TSFQEM and RKG.

The protein belongs to the sulfotransferase 1 family. Homodimer. In terms of tissue distribution, liver of young mature males and uterus.

It localises to the cytoplasm. The protein localises to the cytosol. It catalyses the reaction estrone + 3'-phosphoadenylyl sulfate = estrone 3-sulfate + adenosine 3',5'-bisphosphate + H(+). The catalysed reaction is (24S)-hydroxycholesterol + 3'-phosphoadenylyl sulfate = (24S)-hydroxycholesterol 3-sulfate + adenosine 3',5'-bisphosphate + H(+). It carries out the reaction 17beta-estradiol + 3'-phosphoadenylyl sulfate = 17beta-estradiol 3-sulfate + adenosine 3',5'-bisphosphate + H(+). The enzyme catalyses 3beta-hydroxyandrost-5-en-17-one + 3'-phosphoadenylyl sulfate = dehydroepiandrosterone 3-sulfate + adenosine 3',5'-bisphosphate + H(+). It catalyses the reaction 4-ethylphenol + 3'-phosphoadenylyl sulfate = 4-ethylphenyl sulfate + adenosine 3',5'-bisphosphate + H(+). Inhibited by estradiol. In terms of biological role, sulfotransferase that utilizes 3'-phospho-5'-adenylyl sulfate (PAPS) as sulfonate donor to catalyze the sulfate conjugation of estradiol and estrone. Is a key enzyme in estrogen homeostasis, the sulfation of estrogens leads to their inactivation. Also sulfates dehydroepiandrosterone (DHEA), pregnenolone, (24S)-hydroxycholesterol and xenobiotic compounds like ethinylestradiol, equalenin, diethyl stilbesterol and 1-naphthol at significantly lower efficiency. Does not sulfonate cortisol, testosterone and dopamine. May play a role in gut microbiota-host metabolic interaction. O-sulfonates 4-ethylphenol (4-EP), a dietary tyrosine-derived metabolite produced by gut bacteria. The product 4-EPS crosses the blood-brain barrier and may negatively regulate oligodendrocyte maturation and myelination, affecting the functional connectivity of different brain regions associated with the limbic system. The protein is Sulfotransferase 1E1 of Rattus norvegicus (Rat).